The sequence spans 445 residues: Argininosuccinate synthase (445 aa).

ATP contacts are provided by residues 17 to 25 and Ala-43; that span reads AFSGGLDTS. Residue Tyr-99 coordinates L-citrulline. 2 residues coordinate ATP: Gly-129 and Thr-131. L-aspartate contacts are provided by Thr-131, Asn-135, and Asp-136. Asn-135 provides a ligand contact to L-citrulline. ATP is bound at residue Asp-136. Residues Arg-139 and Ser-192 each contribute to the L-citrulline site. Asp-194 contributes to the ATP binding site. Residues Thr-201, Glu-203, and Glu-280 each contribute to the L-citrulline site.

The protein belongs to the argininosuccinate synthase family. Type 2 subfamily. In terms of assembly, homotetramer.

It is found in the cytoplasm. The enzyme catalyses L-citrulline + L-aspartate + ATP = 2-(N(omega)-L-arginino)succinate + AMP + diphosphate + H(+). It functions in the pathway amino-acid biosynthesis; L-arginine biosynthesis; L-arginine from L-ornithine and carbamoyl phosphate: step 2/3. The polypeptide is Argininosuccinate synthase (Burkholderia ambifaria (strain ATCC BAA-244 / DSM 16087 / CCUG 44356 / LMG 19182 / AMMD) (Burkholderia cepacia (strain AMMD))).